Reading from the N-terminus, the 215-residue chain is Protein-L-isoaspartate O-methyltransferase (215 aa).

The active site involves S62.

Belongs to the methyltransferase superfamily. L-isoaspartyl/D-aspartyl protein methyltransferase family.

The protein resides in the cytoplasm. The catalysed reaction is [protein]-L-isoaspartate + S-adenosyl-L-methionine = [protein]-L-isoaspartate alpha-methyl ester + S-adenosyl-L-homocysteine. In terms of biological role, catalyzes the methyl esterification of L-isoaspartyl residues in peptides and proteins that result from spontaneous decomposition of normal L-aspartyl and L-asparaginyl residues. It plays a role in the repair and/or degradation of damaged proteins. In Ruegeria pomeroyi (strain ATCC 700808 / DSM 15171 / DSS-3) (Silicibacter pomeroyi), this protein is Protein-L-isoaspartate O-methyltransferase.